The sequence spans 69 residues: Conotoxin LvVID (69 aa).

The N-terminal stretch at 1-17 (VLIIAVLFLTACQLTTA) is a signal peptide. The propeptide occupies 18 to 40 (ETYPRGQQRHHALRSTDKNSKLT). 3 disulfides stabilise this stretch: Cys-43-Cys-57, Cys-50-Cys-61, and Cys-56-Cys-68.

The protein belongs to the conotoxin O1 superfamily. In terms of tissue distribution, expressed by the venom duct.

It localises to the secreted. The protein is Conotoxin LvVID of Conus lividus (Livid cone).